The primary structure comprises 203 residues: FMN-dependent NADH:quinone oxidoreductase 3 (203 aa).

FMN-binding positions include Ser9, 15-17 (SAS), 95-98 (MYNF), and 139-142 (TAGG).

Belongs to the azoreductase type 1 family. Homodimer. The cofactor is FMN.

It carries out the reaction 2 a quinone + NADH + H(+) = 2 a 1,4-benzosemiquinone + NAD(+). It catalyses the reaction N,N-dimethyl-1,4-phenylenediamine + anthranilate + 2 NAD(+) = 2-(4-dimethylaminophenyl)diazenylbenzoate + 2 NADH + 2 H(+). Functionally, quinone reductase that provides resistance to thiol-specific stress caused by electrophilic quinones. Its function is as follows. Also exhibits azoreductase activity. Catalyzes the reductive cleavage of the azo bond in aromatic azo compounds to the corresponding amines. The polypeptide is FMN-dependent NADH:quinone oxidoreductase 3 (Pseudomonas fluorescens (strain Pf0-1)).